The primary structure comprises 796 residues: Leucine--tRNA ligase (796 aa).

The 'HIGH' region motif lies at 40–51; that stretch reads PYPSASGLHVGH. Positions 569-573 match the 'KMSKS' region motif; sequence KMSKS. Lysine 572 lines the ATP pocket.

Belongs to the class-I aminoacyl-tRNA synthetase family.

It is found in the cytoplasm. The enzyme catalyses tRNA(Leu) + L-leucine + ATP = L-leucyl-tRNA(Leu) + AMP + diphosphate. In Bdellovibrio bacteriovorus (strain ATCC 15356 / DSM 50701 / NCIMB 9529 / HD100), this protein is Leucine--tRNA ligase.